Consider the following 186-residue polypeptide: Tumor necrosis factor alpha-induced protein 8-like protein 1 (186 aa).

The stretch at 37-70 (EVLDELYRVTKEYTRNRKEAQKIIKNLIKMVVKL) forms a coiled coil.

It belongs to the TNFAIP8 family.

The protein localises to the cytoplasm. This chain is Tumor necrosis factor alpha-induced protein 8-like protein 1 (tnfaip8l1), found in Danio rerio (Zebrafish).